A 216-amino-acid chain; its full sequence is uncharacterized protein (216 aa).

The 30-residue stretch at 18–47 (PPDSPIEDRCGSCNICVDSCPTGALVQGGQ) folds into the 4Fe-4S ferredoxin-type domain. Residues Cys-27, Cys-30, Cys-33, Cys-37, Cys-79, Cys-82, and Cys-86 each coordinate [4Fe-4S] cluster.

This is an uncharacterized protein from Geobacillus stearothermophilus (Bacillus stearothermophilus).